Here is a 61-residue protein sequence, read N- to C-terminus: Small ribosomal subunit protein uS14B (61 aa).

Residues cysteine 24, cysteine 27, cysteine 40, and cysteine 43 each coordinate Zn(2+).

It belongs to the universal ribosomal protein uS14 family. Zinc-binding uS14 subfamily. In terms of assembly, part of the 30S ribosomal subunit. Contacts proteins S3 and S10. The cofactor is Zn(2+).

In terms of biological role, binds 16S rRNA, required for the assembly of 30S particles and may also be responsible for determining the conformation of the 16S rRNA at the A site. The polypeptide is Small ribosomal subunit protein uS14B (Rhodococcus jostii (strain RHA1)).